Here is a 228-residue protein sequence, read N- to C-terminus: Probable septum site-determining protein MinC (228 aa).

This sequence belongs to the MinC family. Interacts with MinD and FtsZ.

In terms of biological role, cell division inhibitor that blocks the formation of polar Z ring septums. Rapidly oscillates between the poles of the cell to destabilize FtsZ filaments that have formed before they mature into polar Z rings. Prevents FtsZ polymerization. The protein is Probable septum site-determining protein MinC of Bacillus cytotoxicus (strain DSM 22905 / CIP 110041 / 391-98 / NVH 391-98).